Here is a 476-residue protein sequence, read N- to C-terminus: MASRIGLRMQLMREQAQQEEQRERMQQQAVMHYMQQQQQQQQQQLGGPPTPAINTPVHFQSPPPVPGEVLKVQSYLENPTSYHLQQSQHQKVREYLSETYGNKFAAHISPAQGSPKPPPAASPGVRAGHVLSSSAGNSAPNSPMAMLHIGSNPERELDDVIDNIMRLDDVLGYINPEMQMPNTLPLSSSHLNVYSSDPQVTASLVGVTSSSCPADLTQKRELTDAESRALAKERQKKDNHNLIERRRRFNINDRIKELGMLIPKANDLDVRWNKGTILKASVDYIRRMQKDLQKSRELENHSRRLEMTNKQLWLRIQELEMQARVHGLPTTSPSGMNMAELAQQVVKQELPSEEGPGEALMLGAEVPDPEPLPALPPQAPLPLPTQPPSPFHHLDFSHSLSFGGREDEGPPGYPEPLAPGHGSPFPSLSKKDLDLMLLDDSLLPLASDPLLSTMSPEASKASSRRSSFSMEEGDVL.

Disordered stretches follow at residues 1–66 (MASR…PPVP) and 107–142 (HISP…APNS). The interaction with ACSS2 stretch occupies residues 1–167 (MASRIGLRMQ…DDVIDNIMRL (167 aa)). Over residues 26 to 44 (QQQAVMHYMQQQQQQQQQQ) the composition is skewed to low complexity. Residues Ser-109, Ser-114, Ser-122, and Ser-138 each carry the phosphoserine modification. The segment covering 132 to 142 (SSSAGNSAPNS) has biased composition (low complexity). The Nuclear export signal motif lies at 136-153 (GNSAPNSPMAMLHIGSNP). Position 142 is a phosphoserine; by MTOR (Ser-142). Residues 156–165 (ELDDVIDNIM) form a strong transcription activation domain region. Thr-183 is modified (phosphothreonine). Ser-211 is modified (phosphoserine; by MTOR). Position 212 is an S-(2,3-dicarboxypropyl)cysteine (Cys-212). The bHLH domain maps to 235–288 (QKKDNHNLIERRRRFNINDRIKELGMLIPKANDLDVRWNKGTILKASVDYIRRM). Residues 245-248 (RRRR) carry the Nuclear localization signal motif. Residues 298–319 (LENHSRRLEMTNKQLWLRIQEL) form a leucine-zipper region. Ser-332 carries the phosphoserine modification. A disordered region spans residues 349 to 430 (ELPSEEGPGE…HGSPFPSLSK (82 aa)). Positions 369–390 (PEPLPALPPQAPLPLPTQPPSP) are enriched in pro residues. Phosphoserine occurs at positions 423, 441, 466, 467, and 469. Over residues 447–469 (SDPLLSTMSPEASKASSRRSSFS) the composition is skewed to low complexity. The disordered stretch occupies residues 447-476 (SDPLLSTMSPEASKASSRRSSFSMEEGDVL).

It belongs to the MiT/TFE family. As to quaternary structure, homodimer and heterodimer; with TFE3 or MITF. Interacts (when phosphorylated by MTOR) with YWHAZ; promoting retention in the cytosol. Interacts with IRGM; promoting association between TFEB and PPP3CB and dephosphorylation. Interacts with small GTPases Rag (RagA/RRAGA, RagB/RRAGB, RagC/RRAGC and/or RagD/RRAGD); promoting its recruitment to lysosomal membrane in the presence of nutrients. Interacts with ACSS2. Phosphorylation at Ser-211 by MTOR via non-canonical mTORC1 pathway regulates its subcellular location and activity. When nutrients are present, phosphorylation by MTOR promotes association with 14-3-3/YWHA adapters and retention in the cytosol. Inhibition of mTORC1, starvation and lysosomal disruption, promotes dephosphorylation by calcineurin PPP3CB and translocation to the nucleus. Dephosphorylated by calcineurin PPP3CB in response to lysosomal Ca(2+) release. IRGM promotes dephosphorylation by calcineurin PPP3CB, resulting in TFEB nuclear translocation and stimulation of lysosomal biogenesis. Dephosphorylated by phosphatase PPP3CA following Coxsackievirus B3 infection, leading to nuclear translocation. Exported from the nucleus in a mTORC1-dependent manner in response to nutrient availability. In terms of processing, alkylated via a non-enzymatic covalent modification. Itaconate, an anti-inflammatory metabolite generated in response to lipopolysaccharide, alkylates Cys-212, preventing association with 14-3-3/YWHA adapters, thereby promoting nuclear translocation and activity. Post-translationally, sumoylated; does not affect dimerization with MITF. (Microbial infection) Cleavage by Coxsackievirus B3 protease 3C after site Gln-60. This non-phosphorylated cleavage product retains its ability to interact with TFEB, TFE3 or MITF and presents impaired transcriptional activity, resulting in disruption of lysosomal functions and increased viral infection.

The protein localises to the nucleus. It localises to the cytoplasm. It is found in the cytosol. Its subcellular location is the lysosome membrane. Inhibited by eltrombopag drug, which binds to the bHLH domain and disrupts DNA-binding. Its function is as follows. Transcription factor that acts as a master regulator of lysosomal biogenesis, autophagy, lysosomal exocytosis, lipid catabolism, energy metabolism and immune response. Specifically recognizes and binds E-box sequences (5'-CANNTG-3'); efficient DNA-binding requires dimerization with itself or with another MiT/TFE family member such as TFE3 or MITF. Involved in the cellular response to amino acid availability by acting downstream of MTOR: in the presence of nutrients, TFEB phosphorylation by MTOR promotes its cytosolic retention and subsequent inactivation. Upon starvation or lysosomal stress, inhibition of MTOR induces TFEB dephosphorylation, resulting in nuclear localization and transcription factor activity. Specifically recognizes and binds the CLEAR-box sequence (5'-GTCACGTGAC-3') present in the regulatory region of many lysosomal genes, leading to activate their expression, thereby playing a central role in expression of lysosomal genes. Regulates lysosomal positioning in response to nutrient deprivation by promoting the expression of PIP4P1. Acts as a positive regulator of autophagy by promoting expression of genes involved in autophagy. In association with TFE3, activates the expression of CD40L in T-cells, thereby playing a role in T-cell-dependent antibody responses in activated CD4(+) T-cells and thymus-dependent humoral immunity. Specifically recognizes the gamma-E3 box, a subset of E-boxes, present in the heavy-chain immunoglobulin enhancer. Plays a role in the signal transduction processes required for normal vascularization of the placenta. Involved in the immune response to infection by the bacteria S.aureus, S.typhimurium or S.enterica: infection promotes itaconate production, leading to alkylation, resulting in nuclear localization and transcription factor activity. Itaconate-mediated alkylation activates TFEB-dependent lysosomal biogenesis, facilitating the bacteria clearance during the antibacterial innate immune response. In association with ACSS2, promotes the expression of genes involved in lysosome biogenesis and both autophagy upon glucose deprivation. This chain is Transcription factor EB, found in Homo sapiens (Human).